The primary structure comprises 62 residues: Large ribosomal subunit protein bL28 (62 aa).

This sequence belongs to the bacterial ribosomal protein bL28 family.

The sequence is that of Large ribosomal subunit protein bL28 from Wolinella succinogenes (strain ATCC 29543 / DSM 1740 / CCUG 13145 / JCM 31913 / LMG 7466 / NCTC 11488 / FDC 602W) (Vibrio succinogenes).